A 523-amino-acid chain; its full sequence is Arylsulfatase K (523 aa).

The first 16 residues, 1–16 (MLRVFVLLIFNVNAYC), serve as a signal peptide directing secretion. Ca(2+) contacts are provided by D35 and C75. C75 functions as the Nucleophile in the catalytic mechanism. Residue C75 is modified to 3-oxoalanine (Cys). N-linked (GlcNAc...) asparagine glycosylation occurs at N103. The substrate site is built by K123 and H246. N257 carries N-linked (GlcNAc...) asparagine glycosylation. Residues D308 and H309 each coordinate Ca(2+). Residue N405 is glycosylated (N-linked (GlcNAc...) asparagine).

It belongs to the sulfatase family. It depends on Ca(2+) as a cofactor. The conversion to 3-oxoalanine (also known as C-formylglycine, FGly), of a serine or cysteine residue in prokaryotes and of a cysteine residue in eukaryotes, is critical for catalytic activity.

It localises to the secreted. It is found in the lysosome. The catalysed reaction is an aryl sulfate + H2O = a phenol + sulfate + H(+). It carries out the reaction Hydrolysis of the 2-sulfate groups of the 2-O-sulfo-D-glucuronate residues of chondroitin sulfate, heparin and heparitin sulfate.. In terms of biological role, catalyzes the hydrolysis of pseudosubstrates such as p-nitrocatechol sulfate and p-nitrophenyl sulfate. Catalyzes the hydrolysis of the 2-sulfate groups of the 2-O-sulfo-D-glucuronate residues of chondroitin sulfate, heparin and heparitin sulfate. Acts selectively on 2-sulfoglucuronate and lacks activity against 2-sulfoiduronate. The chain is Arylsulfatase K (arsk) from Danio rerio (Zebrafish).